A 922-amino-acid polypeptide reads, in one-letter code: Cell surface glycoprotein 2 (922 aa).

The N-terminal stretch at 1–23 (MTGNSDKVRSLFLTALMVFSVFA) is a signal peptide. Asn37, Asn56, Asn110, Asn220, Asn251, Asn262, and Asn292 each carry an N-linked (GlcNAc...) asparagine glycan. Asn307 carries an N-linked (GalNAc...) asparagine glycan. Asn319, Asn344, Asn396, Asn437, Asn490, Asn523, Asn557, Asn574, Asn587, Asn616, Asn700, Asn717, Asn809, Asn838, and Asn847 each carry an N-linked (GlcNAc...) asparagine glycan. Residues 816–899 (PHQDTNGNEE…GTETTEAEGP (84 aa)) are disordered. The span at 835–850 (YTQNGSAVTDSANVTV) shows a compositional bias: polar residues. Residues 853–887 (EEPEDTPEDTPEDTPEDTPEDTPEDTPADTPEDTP) show a composition bias toward acidic residues. Low complexity predominate over residues 888 to 899 (DTGTETTEAEGP). The chain crosses the membrane as a helical span at residues 898-918 (GPGFTAAIALIALVAAALLAV). The PGF sorting signal signature appears at 899–901 (PGF).

This sequence belongs to the halobacterial S-layer protein family. In terms of processing, N-glycosylated on Asn-307; this N-linked glycan is a branched trisaccharide containing 2-amino-6-sulfo-2,6-dideoxy-glucose (sulfoquinovosamine). O-glycosylated on Thr residues within the DTPE repeats in the C-terminal region; glycans consist of Glc-Gal disaccharides. Post-translationally, cleaved by the archaeosortase ArtA at the C-terminus, with removal of a short hydrophobic segment. In terms of processing, lipidation.

The protein resides in the secreted. Its subcellular location is the cell wall. It localises to the S-layer. The protein localises to the cell membrane. In terms of biological role, S-layer protein. The S-layer is a paracrystalline mono-layered assembly of proteins which coat the surface of the cell. In H.hispanica, the S-layer contains two different glycoproteins, Slg1 and Slg2, which share highly similar amino acid sequences. This is Cell surface glycoprotein 2 from Haloarcula hispanica (strain ATCC 33960 / DSM 4426 / JCM 8911 / NBRC 102182 / NCIMB 2187 / VKM B-1755).